Here is a 58-residue protein sequence, read N- to C-terminus: U-scoloptoxin(14)-Sa1a (58 aa).

The signal sequence occupies residues 1–18 (MNRILGMIFLFCLISCYA).

This sequence belongs to the scoloptoxin-14 family. Post-translationally, contains 4 disulfide bonds. In terms of tissue distribution, expressed by the venom gland.

It localises to the secreted. This chain is U-scoloptoxin(14)-Sa1a, found in Scolopendra alternans (Florida Keys giant centipede).